A 221-amino-acid chain; its full sequence is Small ribosomal subunit protein uS3 (221 aa).

In terms of domain architecture, KH type-2 spans 39–107 (IREYIKRKLY…QVHVNIVEVK (69 aa)).

Belongs to the universal ribosomal protein uS3 family. In terms of assembly, part of the 30S ribosomal subunit. Forms a tight complex with proteins S10 and S14.

Functionally, binds the lower part of the 30S subunit head. Binds mRNA in the 70S ribosome, positioning it for translation. The chain is Small ribosomal subunit protein uS3 from Desulforamulus reducens (strain ATCC BAA-1160 / DSM 100696 / MI-1) (Desulfotomaculum reducens).